The primary structure comprises 782 residues: General transcription and DNA repair factor IIH helicase/translocase subunit XPB (782 aa).

Over residues 1 to 11 (MGKRDRVDRDK) the composition is skewed to basic and acidic residues. The segment at 1 to 52 (MGKRDRVDRDKKKSKKRQYEEEEEDEDDAPGNESQEAVPSAAGKQVDESSTK) is disordered. The short motif at 6 to 18 (RVDRDKKKSKKRQ) is the Nuclear localization signal element. Over residues 20–30 (EEEEEDEDDAP) the composition is skewed to acidic residues. Residue Ser-34 is modified to Phosphoserine. The 162-residue stretch at 328 to 489 (FGNGRARSGV…LNFLIGPKLY (162 aa)) folds into the Helicase ATP-binding domain. 341-348 (PCGAGKSL) serves as a coordination point for ATP. A DEVH box motif is present at residues 442–445 (EVHT). The 161-residue stretch at 543-703 (ACQFLIKFHE…AGMEEEELAF (161 aa)) folds into the Helicase C-terminal domain. Position 686 is a phosphoserine (Ser-686). Residue Ser-751 is modified to Phosphoserine; by CK2.

Belongs to the helicase family. RAD25/XPB subfamily. Component of the 7-subunit TFIIH core complex composed of XPB/ERCC3, XPD/ERCC2, GTF2H1, GTF2H2, GTF2H3, GTF2H4 and GTF2H5, which is active in NER. The core complex associates with the 3-subunit CDK-activating kinase (CAK) module composed of CCNH/cyclin H, CDK7 and MNAT1 to form the 10-subunit holoenzyme (holo-TFIIH) active in transcription. Interacts with PUF60. Interacts with ATF7IP. Interacts with KAT2A; leading to KAT2A recruitment to promoters and acetylation of histones. Part of TBP-based Pol II pre-initiation complex (PIC), in which Pol II core assembles with general transcription factors and other specific initiation factors including GTF2E1, GTF2E2, GTF2F1, GTF2F2, TCEA1, ERCC2, ERCC3, GTF2H2, GTF2H3, GTF2H4, GTF2H5, GTF2A1, GTF2A2, GTF2B and TBP; this large multi-subunit PIC complex mediates DNA unwinding and targets Pol II core to the transcription start site where the first phosphodiester bond forms. Phosphorylation on Ser-751 by CK2 controls the 5'-excision activity of ERCC1-XPF endonuclease; phosphorylated protein inhibits the excision activity and thus NER. Dephosphorylation reactivates the 5'-excision step. Phosphorylation has no effect on transcription or the 3'-5' helicase activity.

The protein localises to the nucleus. The catalysed reaction is Couples ATP hydrolysis with the unwinding of duplex DNA by translocating in the 3'-5' direction.. It catalyses the reaction ATP + H2O = ADP + phosphate + H(+). With respect to regulation, phosphorylation on Ser-751 by CK2 controls the 5'-excision activity of ERCC1-XPF endonuclease; phosphorylated protein inhibits the excision activity and thus NER. ATPase activity is stimulated by TFIIH subunit p52 (GTF2H4). DNA translocase activity by this subunit in TFIIH is stimulated by XPA, ERCC5/XPG and XFP plus ERCC1. Functionally, ATP-dependent 3'-5' DNA helicase/translocase; binds dsDNA rather than ssDNA, unzipping it in a translocase rather than classical helicase activity. Component of the general transcription and DNA repair factor IIH (TFIIH) core complex. When complexed to CDK-activating kinase (CAK), involved in RNA transcription by RNA polymerase II. The ATPase activity of XPB/ERCC3, but not its helicase activity, is required for DNA opening; it may wrap around the damaged DNA wedging it open, causing localized melting and twisting that allows XPD/ERCC2 helicase to anchor. The ATP-dependent helicase activity of XPB/ERCC3 may be required for promoter escape. Also involved in transcription-coupled nucleotide excision repair (NER) of damaged DNA. In NER, TFIIH acts by opening DNA around the lesion to allow the excision of the damaged oligonucleotide and its replacement by a new DNA fragment. The structure of the TFIIH transcription complex differs from the NER-TFIIH complex; large movements by XPD/ERCC2 and XPB/ERCC3 are stabilized by XPA. The chain is General transcription and DNA repair factor IIH helicase/translocase subunit XPB (Ercc3) from Rattus norvegicus (Rat).